The chain runs to 179 residues: Large ribosomal subunit protein uL5 (179 aa).

The protein belongs to the universal ribosomal protein uL5 family. In terms of assembly, part of the 50S ribosomal subunit; part of the 5S rRNA/L5/L18/L25 subcomplex. Contacts the 5S rRNA and the P site tRNA. Forms a bridge to the 30S subunit in the 70S ribosome.

In terms of biological role, this is one of the proteins that bind and probably mediate the attachment of the 5S RNA into the large ribosomal subunit, where it forms part of the central protuberance. In the 70S ribosome it contacts protein S13 of the 30S subunit (bridge B1b), connecting the 2 subunits; this bridge is implicated in subunit movement. Contacts the P site tRNA; the 5S rRNA and some of its associated proteins might help stabilize positioning of ribosome-bound tRNAs. In Shewanella baltica (strain OS223), this protein is Large ribosomal subunit protein uL5.